We begin with the raw amino-acid sequence, 213 residues long: Nucleolar protein 12 (213 aa).

A coiled-coil region spans residues 33-96 (GFHKRKVERK…RLVTAKTESV (64 aa)). A disordered region spans residues 118–213 (ARLLGLTPPE…LTGKARHSGE (96 aa)). Basic residues-rich tracts occupy residues 170-182 (AHSR…KHPR) and 198-213 (KAQR…HSGE).

Belongs to the RRP17 family. In terms of assembly, interacts with KIAA1191.

The protein localises to the nucleus. It localises to the nucleolus. The protein resides in the cytoplasm. Multifunctional RNA binding protein that plays a role in RNA metabolism and DNA maintenance. Participates in the resolution of DNA stress and the maintenance of genome integrity by localizing to sites of DNA insults. Also plays a role in proper nucleolar organization by limiting nucleolar size and regulating nucleolar number. Mechanistically, regulates the nucleolar levels of fibrillarin and nucleolin, two key players in pre-rRNA processing and ribosome assembly. This Homo sapiens (Human) protein is Nucleolar protein 12 (NOL12).